Here is an 869-residue protein sequence, read N- to C-terminus: Rho GTPase-activating protein 27 (869 aa).

An SH3 domain is found at 6 to 69 (EGDVYVLVEH…PAQYVRELPA (64 aa)). Ala28 carries the phosphotyrosine modification. Residues 104 to 134 (GADGSSAEPRGRASSLCGPARQRTGGQRNSL) form a disordered region. Phosphoserine is present on residues Ser155, Ser215, and Ser249. Disordered stretches follow at residues 208–300 (RCPP…SGES) and 331–401 (ETEE…GWSC). The segment covering 209-220 (CPPRAESPKQVD) has biased composition (basic and acidic residues). Residues 235–250 (RATSPRSAAAPPRLSP) show a composition bias toward low complexity. Positions 246-280 (PRLSPVWETHTDTGTGRPYYYNPDTGVTTWESPFE) constitute a WW 1 domain. Residues 283-294 (EGTTSPATSRAS) are compositionally biased toward polar residues. The WW 2 domain maps to 299–333 (ESLETEWGQYWDEESRRVFFYNPLTGETAWEDETE). Residues 345 to 356 (MQPSLSPRSPGQ) are compositionally biased toward polar residues. Ser350 is subject to Phosphoserine. Residues 414 to 447 (QFTQEQWVRLEDQHGKPYFYNPEDSSVQWELPQV) form the WW 3 domain. 2 disordered regions span residues 449 to 477 (IPAPRSVRKSSQDSDTPAQASPPEEKIKT) and 623 to 642 (EEDVRQNAASPSLSPGGLES). A phosphoserine mark is found at Ser459 and Ser462. Phosphothreonine is present on Thr464. A Phosphoserine modification is found at Ser469. In terms of domain architecture, PH spans 477–593 (TLDKAGVLHR…WHKAIAEGIS (117 aa)). Phosphoserine is present on residues Ser632 and Ser636. The region spanning 677-866 (CALAQLCERE…LILHQCADIF (190 aa)) is the Rho-GAP domain.

As to quaternary structure, interacts with SH3KBP1/CIN85. In terms of tissue distribution, widely expressed. Highly expressed in kidney, lung, small intestine and thymus.

It is found in the cytoplasm. The protein resides in the membrane. Rho GTPase-activating protein which may be involved in clathrin-mediated endocytosis. GTPase activators for the Rho-type GTPases act by converting them to an inactive GDP-bound state. Has activity toward CDC42 and RAC1. The chain is Rho GTPase-activating protein 27 (Arhgap27) from Mus musculus (Mouse).